A 240-amino-acid polypeptide reads, in one-letter code: Eukaryotic translation initiation factor 3 subunit J (240 aa).

The interval 19–95 is disordered; it reads KADVNKWAGE…FANMTPEQQL (77 aa). A compositionally biased stretch (acidic residues) spans 28 to 45; the sequence is EDEDDVKDNWEDDDEEEE. The span at 46-56 shows a compositional bias: basic and acidic residues; sequence KKDAPKQEDTP. A compositionally biased stretch (basic residues) spans 60 to 71; that stretch reads AKPKKAAQQKKL. Coiled coils occupy residues 63–90 and 176–235; these read KKAAQQKKLKKEDLERLQREEEEFANMT and SNNI…DYDD. Positions 72–81 are enriched in basic and acidic residues; that stretch reads KKEDLERLQR.

This sequence belongs to the eIF-3 subunit J family. As to quaternary structure, component of the eukaryotic translation initiation factor 3 (eIF-3) complex.

The protein resides in the cytoplasm. Its function is as follows. Component of the eukaryotic translation initiation factor 3 (eIF-3) complex, which is involved in protein synthesis of a specialized repertoire of mRNAs and, together with other initiation factors, stimulates binding of mRNA and methionyl-tRNAi to the 40S ribosome. The eIF-3 complex specifically targets and initiates translation of a subset of mRNAs involved in cell proliferation. This is Eukaryotic translation initiation factor 3 subunit J from Anopheles gambiae (African malaria mosquito).